Here is a 267-residue protein sequence, read N- to C-terminus: Thymidylate synthase (267 aa).

Arg25 is a binding site for dUMP. Residue His55 coordinates (6R)-5,10-methylene-5,6,7,8-tetrahydrofolate. Arg130–Arg131 lines the dUMP pocket. Catalysis depends on Cys150, which acts as the Nucleophile. Residues Arg170–Asp173, Asn181, and His211–Tyr213 contribute to the dUMP site. Asp173 serves as a coordination point for (6R)-5,10-methylene-5,6,7,8-tetrahydrofolate. Ala266 contributes to the (6R)-5,10-methylene-5,6,7,8-tetrahydrofolate binding site.

The protein belongs to the thymidylate synthase family. Bacterial-type ThyA subfamily. Homodimer.

The protein localises to the cytoplasm. The enzyme catalyses dUMP + (6R)-5,10-methylene-5,6,7,8-tetrahydrofolate = 7,8-dihydrofolate + dTMP. It participates in pyrimidine metabolism; dTTP biosynthesis. Functionally, catalyzes the reductive methylation of 2'-deoxyuridine-5'-monophosphate (dUMP) to 2'-deoxythymidine-5'-monophosphate (dTMP) while utilizing 5,10-methylenetetrahydrofolate (mTHF) as the methyl donor and reductant in the reaction, yielding dihydrofolate (DHF) as a by-product. This enzymatic reaction provides an intracellular de novo source of dTMP, an essential precursor for DNA biosynthesis. This is Thymidylate synthase from Corynebacterium efficiens (strain DSM 44549 / YS-314 / AJ 12310 / JCM 11189 / NBRC 100395).